The following is a 154-amino-acid chain: Ascorbate-specific PTS system EIIA component (154 aa).

The PTS EIIA type-2 domain occupies 6–150 (SLAENKSIRL…QEVLDLIDRT (145 aa)). The active-site Tele-phosphohistidine intermediate is the histidine 68. Position 68 is a phosphohistidine (histidine 68).

The protein localises to the cytoplasm. Its function is as follows. The phosphoenolpyruvate-dependent sugar phosphotransferase system (sugar PTS), a major carbohydrate active transport system, catalyzes the phosphorylation of incoming sugar substrates concomitantly with their translocation across the cell membrane. The enzyme II UlaABC PTS system is involved in ascorbate transport. The polypeptide is Ascorbate-specific PTS system EIIA component (ulaC) (Escherichia coli O157:H7).